The sequence spans 1155 residues: DNA-directed RNA polymerase subunit beta (1155 aa).

This sequence belongs to the RNA polymerase beta chain family. The RNAP catalytic core consists of 2 alpha, 1 beta, 1 beta' and 1 omega subunit. When a sigma factor is associated with the core the holoenzyme is formed, which can initiate transcription.

It catalyses the reaction RNA(n) + a ribonucleoside 5'-triphosphate = RNA(n+1) + diphosphate. Its function is as follows. DNA-dependent RNA polymerase catalyzes the transcription of DNA into RNA using the four ribonucleoside triphosphates as substrates. The polypeptide is DNA-directed RNA polymerase subunit beta (Borreliella burgdorferi (strain ZS7) (Borrelia burgdorferi)).